The chain runs to 271 residues: Collectin-11 (271 aa).

The signal sequence occupies residues M1–G25. One can recognise a Collagen-like domain in the interval G44 to K103. The disordered stretch occupies residues A46–P112. Positions E124–E148 form a coiled coil. Residues T149 to E265 enclose the C-type lectin domain. Intrachain disulfides connect C170–C264 and C242–C256. R200 is an a carbohydrate binding site. The Ca(2+) site is built by D207, E211, E232, N234, N235, D238, E240, and D241. E240 is a binding site for a carbohydrate. A carbohydrate is bound by residues E244 and I252–V254. Position 253 (D253) interacts with Ca(2+).

It belongs to the COLEC10/COLEC11 family. As to quaternary structure, homotrimer; disulfide-linked. Interacts with MASP1; probably triggers the lectin pathway of complement.

It localises to the secreted. Lectin that plays a role in innate immunity, apoptosis and embryogenesis. Calcium-dependent lectin that binds self and non-self glycoproteins presenting high mannose oligosaccharides with at least one terminal alpha-1,2-linked mannose epitope. Primarily recognizes the terminal disaccharide of the glycan. Also recognizes a subset of fucosylated glycans and lipopolysaccharides. Plays a role in innate immunity through its ability to bind non-self sugars presented by microorganisms and to activate the complement through the recruitment of MAPS1. Also plays a role in apoptosis through its ability to bind in a calcium-independent manner the DNA present at the surface of apoptotic cells and to activate the complement in response to this binding. Finally, plays a role in development, probably serving as a guidance cue during the migration of neural crest cells and other cell types during embryogenesis. The chain is Collectin-11 (colec11) from Danio rerio (Zebrafish).